Consider the following 507-residue polypeptide: ATP synthase subunit alpha, chloroplastic (507 aa).

170–177 (GDRQTGKT) serves as a coordination point for ATP.

This sequence belongs to the ATPase alpha/beta chains family. As to quaternary structure, F-type ATPases have 2 components, CF(1) - the catalytic core - and CF(0) - the membrane proton channel. CF(1) has five subunits: alpha(3), beta(3), gamma(1), delta(1), epsilon(1). CF(0) has four main subunits: a, b, b' and c.

The protein resides in the plastid. The protein localises to the chloroplast thylakoid membrane. It carries out the reaction ATP + H2O + 4 H(+)(in) = ADP + phosphate + 5 H(+)(out). Produces ATP from ADP in the presence of a proton gradient across the membrane. The alpha chain is a regulatory subunit. This Solanum bulbocastanum (Wild potato) protein is ATP synthase subunit alpha, chloroplastic.